The primary structure comprises 157 residues: S-ribosylhomocysteine lyase (157 aa).

The Fe cation site is built by His54, His58, and Cys126.

The protein belongs to the LuxS family. In terms of assembly, homodimer. The cofactor is Fe cation.

It catalyses the reaction S-(5-deoxy-D-ribos-5-yl)-L-homocysteine = (S)-4,5-dihydroxypentane-2,3-dione + L-homocysteine. Its function is as follows. Involved in the synthesis of autoinducer 2 (AI-2) which is secreted by bacteria and is used to communicate both the cell density and the metabolic potential of the environment. The regulation of gene expression in response to changes in cell density is called quorum sensing. Catalyzes the transformation of S-ribosylhomocysteine (RHC) to homocysteine (HC) and 4,5-dihydroxy-2,3-pentadione (DPD). The polypeptide is S-ribosylhomocysteine lyase (Bacillus velezensis (strain DSM 23117 / BGSC 10A6 / LMG 26770 / FZB42) (Bacillus amyloliquefaciens subsp. plantarum)).